The sequence spans 163 residues: Large ribosomal subunit protein uL10 (163 aa).

Belongs to the universal ribosomal protein uL10 family. As to quaternary structure, part of the ribosomal stalk of the 50S ribosomal subunit. The N-terminus interacts with L11 and the large rRNA to form the base of the stalk. The C-terminus forms an elongated spine to which L12 dimers bind in a sequential fashion forming a multimeric L10(L12)X complex.

Its function is as follows. Forms part of the ribosomal stalk, playing a central role in the interaction of the ribosome with GTP-bound translation factors. The protein is Large ribosomal subunit protein uL10 of Haemophilus influenzae (strain PittGG).